Here is a 359-residue protein sequence, read N- to C-terminus: Peptide chain release factor 1 (359 aa).

Position 235 is an N5-methylglutamine (Gln-235). A disordered region spans residues 285-305 (KRDSEISQMRKSQIGSGDRSE). Positions 290–299 (ISQMRKSQIG) are enriched in polar residues.

This sequence belongs to the prokaryotic/mitochondrial release factor family. Methylated by PrmC. Methylation increases the termination efficiency of RF1.

The protein localises to the cytoplasm. Peptide chain release factor 1 directs the termination of translation in response to the peptide chain termination codons UAG and UAA. The chain is Peptide chain release factor 1 from Ehrlichia canis (strain Jake).